The sequence spans 395 residues: Calsequestrin-1 (395 aa).

A signal peptide spans Met-1–Gly-28. Position 37 is a phosphotyrosine (Tyr-37). Ser-75 bears the Phosphoserine mark. Thr-118 carries the post-translational modification Phosphothreonine. At Ser-210 the chain carries Phosphoserine. N-linked (GlcNAc...) asparagine glycosylation occurs at Asn-344. The disordered stretch occupies residues Glu-376–Asp-395.

It belongs to the calsequestrin family. Monomer; increases in response to a depletion of intracellular calcium. Homodimer. Homotetramer and homopolymer. Can form linear homooligomers. Ca(2+) ions promote oligomerization. Interacts (via C-terminal end and preferentially with the monomeric form) with STIM1; this interaction increases in response to a depletion of intracellular calcium, decreases both STIM1 aggregation and clustering, interaction of STIM1 with ORAI1 and store-operated Ca(2+) entry (SOCE) activity. Interacts with ASPH and TRDN. Post-translationally, N-glycosylated. Detected in skeletal muscle (at protein level). Detected in skeletal muscle.

Its subcellular location is the endoplasmic reticulum. The protein localises to the sarcoplasmic reticulum. It localises to the sarcoplasmic reticulum lumen. It is found in the mitochondrion matrix. The protein resides in the sarcoplasmic reticulum membrane. In terms of biological role, calsequestrin is a high-capacity, moderate affinity, calcium-binding protein and thus acts as an internal calcium store in muscle. Calcium ions are bound by clusters of acidic residues at the protein surface, often at the interface between subunits. Can bind around 80 Ca(2+) ions. Regulates the release of lumenal Ca(2+) via the calcium release channel RYR1; this plays an important role in triggering muscle contraction. Negatively regulates store-operated Ca(2+) entry (SOCE) activity. The polypeptide is Calsequestrin-1 (CASQ1) (Oryctolagus cuniculus (Rabbit)).